We begin with the raw amino-acid sequence, 658 residues long: Threonine--tRNA ligase (658 aa).

One can recognise a TGS domain in the interval 1-64 (MSNTVSLQFP…GASGKVEIIT (64 aa)). Residues 246 to 548 (DHRRLGREMD…LIENFAGHMP (303 aa)) form a catalytic region. Residues Cys-343, His-394, and His-525 each coordinate Zn(2+).

This sequence belongs to the class-II aminoacyl-tRNA synthetase family. As to quaternary structure, homodimer. Zn(2+) is required as a cofactor.

Its subcellular location is the cytoplasm. It catalyses the reaction tRNA(Thr) + L-threonine + ATP = L-threonyl-tRNA(Thr) + AMP + diphosphate + H(+). Its function is as follows. Catalyzes the attachment of threonine to tRNA(Thr) in a two-step reaction: L-threonine is first activated by ATP to form Thr-AMP and then transferred to the acceptor end of tRNA(Thr). Also edits incorrectly charged L-seryl-tRNA(Thr). The protein is Threonine--tRNA ligase of Brucella canis (strain ATCC 23365 / NCTC 10854 / RM-666).